Here is a 727-residue protein sequence, read N- to C-terminus: Zinc metalloproteinase nas-38 (727 aa).

A signal peptide spans 1 to 25 (MPSPSYNRHIIIASCFCCLLIFSSA). Residues 26 to 114 (ARVPKASKKH…FTQGKREKRK (89 aa)) constitute a propeptide that is removed on maturation. In terms of domain architecture, Peptidase M12A spans 113–312 (RKIGRNPLYK…QAINMAYGCT (200 aa)). Intrachain disulfides connect Cys-158-Cys-311 and Cys-179-Cys-199. His-207 is a Zn(2+) binding site. Glu-208 is an active-site residue. 2 residues coordinate Zn(2+): His-211 and His-217. An EGF-like domain is found at 306–345 (NMAYGCTESCADLPCLRNGYTHPNNCSMCACPEGLSGRYC). An N-linked (GlcNAc...) asparagine glycan is attached at Asn-330. A CUB domain is found at 353 to 469 (AQCGGVIFAT…AGFKAKFWSN (117 aa)). 2 cysteine pairs are disulfide-bonded: Cys-355/Cys-383 and Cys-411/Cys-432. Disordered stretches follow at residues 473 to 506 (PEGVSTPLPPTTAPLPEISETTQKPEPTTVQSTT) and 532 to 561 (TPLTSSSTTTESTTVSSTTQSTTWLPTEPS). Residues 535 to 554 (TSSSTTTESTTVSSTTQSTT) are compositionally biased toward low complexity. The 49-residue stretch at 610–658 (ECGCGAWSEWQGECSQQCGGCGHRLRKRECKKEACRKEEKRPCNFSACP) folds into the TSP type-1 domain. Disulfide bonds link Cys-611-Cys-644, Cys-623-Cys-652, Cys-627-Cys-657, and Cys-639-Cys-644. N-linked (GlcNAc...) asparagine glycosylation is found at Asn-653 and Asn-714.

Requires Zn(2+) as cofactor. Expressed in the epidermis, the excretory canal cell, duct cell, pore cell, and excretory gland cell. Expressed in an oscillating pattern in epithelial cells with increased expression during the lethargus phase which occurs during molting between larval and adult stages. Not expressed in seam cells or in the RIS neuron.

It is found in the secreted. Functionally, metalloprotease. As part of the innate immune response to molting and injury to the adult epidermis, positively regulates the activity of the transcription factor sta-2 to promote the expression of epidermal antimicrobial peptides such as nlp-29. Through regulating the expression of epidermal antimicrobial peptides such as nlp-29, modulates sleep duration and locomotion quiescence during the sleep-like state called lethargus which occurs during molting between larval and adult stages. This may occur through the sleep-active RIS neuron. This is Zinc metalloproteinase nas-38 from Caenorhabditis elegans.